The primary structure comprises 388 residues: 2-epi-5-epi-valiolone synthase (388 aa).

Residues 92-95, 124-128, 148-149, Lys161, Lys170, and 188-191 each bind NAD(+); these read ERNK, GIVAD, TT, and LLAT. Zn(2+) is bound by residues Glu203, His267, and His283.

The protein belongs to the sugar phosphate cyclases superfamily. EEVS-like family. Requires NAD(+) as cofactor. Co(2+) serves as cofactor. It depends on Zn(2+) as a cofactor.

It carries out the reaction D-sedoheptulose 7-phosphate = 2-epi-5-epi-valiolone + phosphate. Its function is as follows. Catalyzes the cyclization of D-sedoheptulose 7-phosphate to 2-epi-5-epi-valiolone. Probably involved in acarbose biosynthesis. The polypeptide is 2-epi-5-epi-valiolone synthase (Streptomyces glaucescens).